Consider the following 384-residue polypeptide: GDP/UDP-N,N'-diacetylbacillosamine 2-epimerase (hydrolyzing) (384 aa).

This sequence belongs to the UDP-N-acetylglucosamine 2-epimerase family.

The enzyme catalyses GDP-N,N'-diacetylbacillosamine + H2O = 2,4-diacetamido-2,4,6-trideoxy-alpha-D-mannopyranose + GDP + H(+). It catalyses the reaction UDP-N,N'-diacetylbacillosamine + H2O = 2,4-diacetamido-2,4,6-trideoxy-alpha-D-mannopyranose + UDP + H(+). In terms of biological role, involved in biosynthesis of legionaminic acid (5,7-diamino-3,5,7,9-tetradeoxy-D-glycero-D-galacto-non-2-ulosonic acid)(Leg), a sialic acid-like derivative that is incorporated into flagellin via O-linkage to Ser/Thr. Catalyzes the conversion of GDP-N,N'-diacetylbacillosamine (Bac2Ac4Ac) into 2,4-diacetamido-2,4,6-trideoxymannose and GDP. It can also use UDP-N,N'-diacetylbacillosamine however it generates small quantities of 2,4-diacetamido-2,4,6-trideoxymannose. The sequence is that of GDP/UDP-N,N'-diacetylbacillosamine 2-epimerase (hydrolyzing) (legG) from Campylobacter jejuni subsp. jejuni serotype O:2 (strain ATCC 700819 / NCTC 11168).